A 48-amino-acid chain; its full sequence is M-oxotoxin-Ot1a (48 aa).

Expressed by the venom gland.

The protein resides in the secreted. It is found in the target cell membrane. Disrupts cell membranes, particularly those rich in phosphocholine, through formation of pores. Has antimicrobial activity against Gram-negative bacterium E.coli, Gram-positive bacteria B.subtilis and S.aureus, and hemolytic activity against sheep, pig and guinea pig erythrocytes. Has insecticidal activity against S.frugiperda ovarian cells by opening non-selective ion channels. Enhances the insecticidal activity of spider venom neurotoxic peptides. The polypeptide is M-oxotoxin-Ot1a (Oxyopes takobius (Lynx spider)).